The chain runs to 715 residues: Targeting protein for Xklp2-B (715 aa).

Residues 36–167 form a disordered region; it reads NAENIPPDQK…LTMPATPTVL (132 aa). The span at 47 to 56 shows a compositional bias: polar residues; it reads LSETSVNAEQ. Positions 85–103 are enriched in basic residues; sequence QTKRSARRMSKKHRQKILL. A compositionally biased stretch (basic and acidic residues) spans 104-115; the sequence is KMKETHLEKETA. Residues 141–152 are compositionally biased toward polar residues; that stretch reads QPTSSHHGTTSP. The residue at position 204 (S204) is a Phosphoserine; by plk1. Disordered stretches follow at residues 260-291 and 314-337; these read PPTS…EEAS and RSRQ…TNPK.

The protein belongs to the TPX2 family. In terms of assembly, associates with microtubules. Interacts with aurka and plk1. Interacts with kif15. Phosphorylated during mitosis. Hyperphosphorylated upon assembly of microtubules.

It localises to the nucleus. The protein localises to the cytoplasm. The protein resides in the cytoskeleton. Its subcellular location is the spindle. It is found in the spindle pole. Spindle assembly factor. Required for normal assembly of mitotic spindles. Mediates the binding kif15 and aurka to spindle microtubules. Required for targeting kif15 to microtubule minus ends. Activates aurka by promoting its autophosphorylation and protects the phosphorylated residue against dephosphorylation. This chain is Targeting protein for Xklp2-B (tpx2-b), found in Xenopus laevis (African clawed frog).